Consider the following 437-residue polypeptide: RING finger protein 150 (437 aa).

A signal peptide spans 1 to 34; sequence MTMSLIQACRSLALSTWLLSFCFVHLLCLDFTVA. Over 35-207 the chain is Extracellular; the sequence is EKEEWYTAFV…NLQKYVSRTS (173 aa). Asn45, Asn124, Asn152, and Asn185 each carry an N-linked (GlcNAc...) asparagine glycan. One can recognise a PA domain in the interval 80 to 182; the sequence is SPKQDARGEV…PKGKEIVSLL (103 aa). The chain crosses the membrane as a helical span at residues 208-228; it reads VVFVSISFIVLMIISLAWLVF. At 229 to 437 the chain is on the cytoplasmic side; sequence YYIQRFRYAN…TDQDCEEVKS (209 aa). The segment at 277–318 adopts an RING-type; atypical zinc-finger fold; sequence CAVCIEGYKPNDVVRILPCRHLFHKSCVDPWLLDHRTCPMCK.

The protein localises to the membrane. This is RING finger protein 150 (Rnf150) from Mus musculus (Mouse).